The following is a 395-amino-acid chain: Transcription termination/antitermination protein NusA (395 aa).

An S1 motif domain is found at 137 to 201 (NSVLMGQVIL…TKKGLLLELS (65 aa)). 2 KH domains span residues 243–291 (SHNA…TLAL) and 331–378 (KVRL…NESE).

This sequence belongs to the NusA family. In terms of assembly, monomer. Binds directly to the core enzyme of the DNA-dependent RNA polymerase and to nascent RNA.

The protein resides in the cytoplasm. Functionally, participates in both transcription termination and antitermination. This Helicobacter pylori (strain ATCC 700392 / 26695) (Campylobacter pylori) protein is Transcription termination/antitermination protein NusA.